The chain runs to 150 residues: Transcription antitermination protein NusB (150 aa).

The protein belongs to the NusB family.

Functionally, involved in transcription antitermination. Required for transcription of ribosomal RNA (rRNA) genes. Binds specifically to the boxA antiterminator sequence of the ribosomal RNA (rrn) operons. The protein is Transcription antitermination protein NusB of Streptococcus pyogenes serotype M2 (strain MGAS10270).